Consider the following 361-residue polypeptide: G2/mitotic-specific cyclin-B (361 aa).

This sequence belongs to the cyclin family. Cyclin AB subfamily.

Its function is as follows. Essential for the control of the cell cycle at the G2/M (mitosis) transition. Interacts with the CDC2 protein kinase to form MPF. G2/M cyclins accumulate steadily during G2 and are abruptly destroyed at mitosis. The sequence is that of G2/mitotic-specific cyclin-B from Hydra vulgaris (Hydra).